Reading from the N-terminus, the 741-residue chain is NUT family member 2G (741 aa).

5 disordered regions span residues 172–200, 293–375, 391–424, 496–624, and 638–741; these read PGNAGPWPQGAHGEGSLAPSQAKARPDDS, IQKS…PEEI, LGSHPGDTGEPEGQREKGKVEQPQEEDGMTSDPG, RAAP…LPGM, and RLSQ…HCSQ. Positions 304 to 321 are enriched in pro residues; it reads SLPPPAPPRLEPRGPPAP. Basic and acidic residues predominate over residues 402–412; it reads EGQREKGKVEQ. Polar residues predominate over residues 528–545; it reads QRVSVETSPPQTAAQDPQ. The segment covering 639–650 has biased composition (low complexity); it reads LSQSPVPSSGLL. Over residues 731 to 741 the composition is skewed to basic residues; the sequence is SRRKKKRHCSQ.

The protein belongs to the NUT family.

This is NUT family member 2G (NUTM2G) from Homo sapiens (Human).